A 68-amino-acid chain; its full sequence is Dermaseptin-H5 (68 aa).

The first 17 residues, 1-17 (KSLFLVLFLGMVSLSIC), serve as a signal peptide directing secretion. Positions 18-38 (EEEKRENEDEEKQEDDEQSEM) are excised as a propeptide. A disordered region spans residues 19–40 (EEKRENEDEEKQEDDEQSEMKR). Positions 25–35 (EDEEKQEDDEQ) are enriched in acidic residues. Residue Leu-65 is modified to Leucine amide. A propeptide spanning residues 67-68 (EQ) is cleaved from the precursor.

As to expression, expressed by the skin glands.

Its subcellular location is the secreted. Its function is as follows. Has antibacterial activity against the Gram-negative bacteria E.coli ATCC 11775 (MIC=0.5 uM), and the Gram-positive bacteria S.aureus ATCC 12600 (MIC=0.5 uM) and M.luteus ATCC 49732 (MIC=2.0 uM). Does not inhibit the growth of the fungus C.albicans. Probably acts by disturbing membrane functions with its amphipathic structure. The sequence is that of Dermaseptin-H5 from Pithecopus azureus (Orange-legged monkey tree frog).